We begin with the raw amino-acid sequence, 330 residues long: MICVAIDAMGGDFGCEPIIEGTIDALKEREFTAFLVGDQAQMEKFVPKEFINRVKFIQSNEIFEMKEGATNVLRHKESSIYKAVELVRSGECQAVVSAGHSGATMSLATLRVGRLKNVARPPIATLMPTSTGTRTLLLDVGANVDCKAEHIFQFGVMGEAYAKEIMGIKEPKIGILSNGEEDGKGNEVTKEAFKLLKKMKNFVGNAEGSQIFDGSMDVIVCDGFVGNIALKSSEGVAHAMNKLIKKEVKKSPLAIAGAVLMKKVFKIVRKNTDYDEYGGAPLLGVKNCVIISHGKSTPKAIKNAIFQALKFSNSNINSVISNELEKFKNE.

This sequence belongs to the PlsX family. Homodimer. Probably interacts with PlsY.

It is found in the cytoplasm. It catalyses the reaction a fatty acyl-[ACP] + phosphate = an acyl phosphate + holo-[ACP]. It participates in lipid metabolism; phospholipid metabolism. Its function is as follows. Catalyzes the reversible formation of acyl-phosphate (acyl-PO(4)) from acyl-[acyl-carrier-protein] (acyl-ACP). This enzyme utilizes acyl-ACP as fatty acyl donor, but not acyl-CoA. The polypeptide is Phosphate acyltransferase (Campylobacter hominis (strain ATCC BAA-381 / DSM 21671 / CCUG 45161 / LMG 19568 / NCTC 13146 / CH001A)).